The following is a 455-amino-acid chain: MVESTTLVNQTWWYNPTVDIHPHWAKFDPIPDAVYYSVGIFIGVVGIIGILGNGVVIYLFSKTKSLQTPANMFIINLAMSDLSFSAINGFPLKTISAFMKKWIFGKVACQLYGLLGGIFGFMSINTMAMISIDRYNVIGRPMAASKKMSHRRAFLMIIFVWMWSIVWSVGPVFNWGAYVPEGILTSCSFDYLSTDPSTRSFILCMYFCGFMLPIIIIAFCYFNIVMSVSNHEKEMAAMAKRLNAKELRKAQAGASAEMKLAKISMVIITQFMLSWSPYAIIALLAQFGPAEWVTPYAAELPVLFAKASAIHNPIVYSVSHPKFREAIQTTFPWLLTCCQFDEKECEDANDAEEEVVASERGGESRDAAQMKEMMAMMQKMQAQQAAYQPPPPPQGYPPQGYPPQGAYPPPQGYPPQGYPPQGYPPQGYPPQGAPPQVEAPQGAPPQGVDNQAYQA.

At 1–34 the chain is on the extracellular side; that stretch reads MVESTTLVNQTWWYNPTVDIHPHWAKFDPIPDAV. N9 carries N-linked (GlcNAc...) asparagine glycosylation. A helical transmembrane segment spans residues 35 to 59; the sequence is YYSVGIFIGVVGIIGILGNGVVIYL. Residues 60–71 lie on the Cytoplasmic side of the membrane; that stretch reads FSKTKSLQTPAN. The chain crosses the membrane as a helical span at residues 72–98; it reads MFIINLAMSDLSFSAINGFPLKTISAF. At 99–110 the chain is on the extracellular side; it reads MKKWIFGKVACQ. C109 and C187 are oxidised to a cystine. Residues 111-132 traverse the membrane as a helical segment; it reads LYGLLGGIFGFMSINTMAMISI. Residues 133–135 carry the 'Ionic lock' involved in activated form stabilization motif; the sequence is DRY. Topologically, residues 133 to 152 are cytoplasmic; it reads DRYNVIGRPMAASKKMSHRR. A helical membrane pass occupies residues 153 to 173; the sequence is AFLMIIFVWMWSIVWSVGPVF. At 174–200 the chain is on the extracellular side; that stretch reads NWGAYVPEGILTSCSFDYLSTDPSTRS. A helical transmembrane segment spans residues 201 to 225; the sequence is FILCMYFCGFMLPIIIIAFCYFNIV. The Cytoplasmic portion of the chain corresponds to 226 to 262; that stretch reads MSVSNHEKEMAAMAKRLNAKELRKAQAGASAEMKLAK. A helical transmembrane segment spans residues 263-284; sequence ISMVIITQFMLSWSPYAIIALL. The Extracellular portion of the chain corresponds to 285–294; it reads AQFGPAEWVT. Residues 295 to 316 traverse the membrane as a helical segment; the sequence is PYAAELPVLFAKASAIHNPIVY. At K306 the chain carries N6-(retinylidene)lysine. Residues 317-455 are Cytoplasmic-facing; that stretch reads SVSHPKFREA…QGVDNQAYQA (139 aa). Residues C337 and C338 are each lipidated (S-palmitoyl cysteine). Residues 378–387 show a composition bias toward low complexity; sequence QKMQAQQAAY. Residues 378-455 are disordered; the sequence is QKMQAQQAAY…QGVDNQAYQA (78 aa). The span at 388 to 433 shows a compositional bias: pro residues; it reads QPPPPPQGYPPQGYPPQGAYPPPQGYPPQGYPPQGYPPQGYPPQGA. 6 consecutive repeat copies span residues 395–399, 400–404, 412–416, 417–421, 422–426, and 427–431. Positions 395–431 are 6 X 5 AA repeats of G-Y-P-P-Q; the sequence is GYPPQGYPPQGAYPPPQGYPPQGYPPQGYPPQGYPPQ.

This sequence belongs to the G-protein coupled receptor 1 family. Opsin subfamily. Post-translationally, contains one covalently linked retinal chromophore. Upon light absorption, the covalently bound 11-cis-retinal is converted to all-trans-retinal. After hydrolysis of the Schiff base and release of the covalently bound all-trans-retinal, active rhodopsin is regenerated by binding of a fresh molecule of 11-cis-retinal.

It localises to the cell projection. The protein localises to the rhabdomere membrane. Functionally, photoreceptor required for image-forming vision at low light intensity. Light-induced isomerization of 11-cis to all-trans retinal triggers a conformational change that activates signaling via G-proteins. Signaling mediates the activation of phospholipase C. Subsequent receptor phosphorylation mediates displacement of the bound G-protein alpha subunit by arrestin and terminates signaling. This Enteroctopus dofleini (North Pacific giant octopus) protein is Rhodopsin (RHO).